The sequence spans 401 residues: MKTLWQHCNVASMASGVYSIIEDAAMVTSGAHIEWIGRRSEAPAGDYAQVNDLAGAWVTPGFIDCHTHTVFGGNRSGEFEQRLQGVSYAEIAAAGGGIASTVRATRAATEEELFGSARKRLLSLLRDGVTSVEIKSGYGLDLASERKILRVIRRLGEELPVSVRSTCLAAHALPPEYAERSDAYIEHICSDMLPALAAEGLVDAVDAFCEYLAFSPEQVERVFIAAQQLGLPVKLHAEQLSSLHGSSLAARYHALSADHLEFMTEEDAIAMAASGTVAVLLPGAFYFLRETQQPPMEALRKHGVKIAVASDLNPGTSPALSLRLMLNMACTCFRMTPEEALAGVTLHAAQALGMEKTHGSLEVGKVADFVAWQIDRPADLAYWLGGDLEKRVVRHGVEVTV.

Positions 66 and 68 each coordinate Fe(3+). 2 residues coordinate Zn(2+): His66 and His68. Residues Arg75, Tyr138, and His171 each coordinate 4-imidazolone-5-propanoate. An N-formimidoyl-L-glutamate-binding site is contributed by Tyr138. Fe(3+) is bound at residue His236. A Zn(2+)-binding site is contributed by His236. 4-imidazolone-5-propanoate is bound at residue Gln239. Asp311 lines the Fe(3+) pocket. Zn(2+) is bound at residue Asp311. N-formimidoyl-L-glutamate contacts are provided by Asn313 and Gly315. Position 316 (Thr316) interacts with 4-imidazolone-5-propanoate.

Belongs to the metallo-dependent hydrolases superfamily. HutI family. Requires Zn(2+) as cofactor. It depends on Fe(3+) as a cofactor.

The protein resides in the cytoplasm. It catalyses the reaction 4-imidazolone-5-propanoate + H2O = N-formimidoyl-L-glutamate. It functions in the pathway amino-acid degradation; L-histidine degradation into L-glutamate; N-formimidoyl-L-glutamate from L-histidine: step 3/3. Its function is as follows. Catalyzes the hydrolytic cleavage of the carbon-nitrogen bond in imidazolone-5-propanoate to yield N-formimidoyl-L-glutamate. It is the third step in the universal histidine degradation pathway. The chain is Imidazolonepropionase from Pseudomonas fluorescens (strain ATCC BAA-477 / NRRL B-23932 / Pf-5).